The sequence spans 156 residues: Small ribosomal subunit protein uS7 (156 aa).

This sequence belongs to the universal ribosomal protein uS7 family. Part of the 30S ribosomal subunit. Contacts proteins S9 and S11.

Its function is as follows. One of the primary rRNA binding proteins, it binds directly to 16S rRNA where it nucleates assembly of the head domain of the 30S subunit. Is located at the subunit interface close to the decoding center, probably blocks exit of the E-site tRNA. This chain is Small ribosomal subunit protein uS7, found in Rhizobium etli (strain ATCC 51251 / DSM 11541 / JCM 21823 / NBRC 15573 / CFN 42).